Consider the following 414-residue polypeptide: TAR DNA-binding protein 43 (414 aa).

2 consecutive RRM domains span residues 104–200 and 191–262; these read SDLI…RCTE and RKVF…NAEP. Residues 261–274 are compositionally biased toward basic and acidic residues; that stretch reads EPKHNSNRQLERGG. Disordered stretches follow at residues 261 to 303 and 341 to 373; these read EPKH…GNNQ and ASQQNQSGPSGNNQPQGNMQREQNQGFSSGNNS. Residues 275–303 are compositionally biased toward gly residues; the sequence is RFGGNPGGFGNQGGFGNSRGGGGGLGNNQ. Over residues 342-373 the composition is skewed to low complexity; sequence SQQNQSGPSGNNQPQGNMQREQNQGFSSGNNS.

Homodimer.

The protein localises to the nucleus. The protein resides in the cytoplasm. Its subcellular location is the stress granule. It localises to the mitochondrion. Probably involved in transcriptional repression. May play a role in the maintenance of the circadian clock periodicity. This chain is TAR DNA-binding protein 43 (TARDBP), found in Gallus gallus (Chicken).